The following is a 626-amino-acid chain: Leucine aminopeptidase 2-1 (626 aa).

Residues 134–136 and 259–264 each bind substrate; these read QCQ and PYGGME. H288 is a binding site for Zn(2+). Residue E289 is the Proton acceptor of the active site. The Zn(2+) site is built by H292 and E311. Catalysis depends on Y389, which acts as the Proton donor.

Belongs to the peptidase M1 family. The cofactor is Zn(2+).

The protein localises to the cytoplasm. The protein resides in the nucleus. The enzyme catalyses an epoxide + H2O = an ethanediol. In terms of biological role, aminopeptidase that preferentially cleaves di- and tripeptides. Also has low epoxide hydrolase activity (in vitro). Can hydrolyze the epoxide leukotriene LTA(4) but it forms preferentially 5,6-dihydroxy-7,9,11,14-eicosatetraenoic acid rather than the cytokine leukotriene B(4) as the product compared to the homologous mammalian enzyme (in vitro). This Scheffersomyces stipitis (strain ATCC 58785 / CBS 6054 / NBRC 10063 / NRRL Y-11545) (Yeast) protein is Leucine aminopeptidase 2-1 (LKA4).